The chain runs to 1436 residues: Pleiotropic drug resistance protein 1 (1436 aa).

The 274-residue stretch at 165–438 folds into the ABC transporter 1 domain; it reads LDSIHILPSK…FESMGFKCPE (274 aa). Residue 198–205 coordinates ATP; it reads GPPGSGKT. Residues 516 to 729 enclose the ABC transmembrane type-2 1 domain; that stretch reads QLLKVCTERE…SVNAILVNEF (214 aa). 7 helical membrane-spanning segments follow: residues 534-554, 567-587, 622-642, 653-673, 679-699, 707-727, and 764-784; these read FVYL…MTIF, GGIY…NGLS, IPVT…VMGF, FLLL…IAAV, VAST…GFIL, WWIW…ILVN, and IGVG…SVAL. Positions 796–826 are disordered; that stretch reads TISDESENNESESSPQITSTQEGDSASENKK. The segment covering 810-821 has biased composition (polar residues); the sequence is PQITSTQEGDSA. The ABC transporter 2 domain maps to 838-1090; the sequence is ITFDEVVYSV…HLIKYFESIP (253 aa). 883-890 serves as a coordination point for ATP; that stretch reads GVSGAGKT. Residues 1163-1377 form the ABC transmembrane type-2 2 domain; that stretch reads TQCMACLWKQ…TLYGLVASQF (215 aa). Transmembrane regions (helical) follow at residues 1184 to 1204, 1214 to 1234, 1270 to 1290, 1301 to 1321, 1327 to 1347, 1358 to 1378, and 1408 to 1428; these read AVRL…FWDI, LVNA…QNSS, IPYI…MIGF, FFFM…TVAV, VASI…GFIV, WYYW…SQFG, and VVAA…ALGI.

This sequence belongs to the ABC transporter superfamily. ABCG family. PDR (TC 3.A.1.205) subfamily. Roots, petals and leaf epidermis, where it is confined to glandular trichomes (at protein level).

The protein localises to the cell membrane. Functionally, excretes secondary metabolites such as terpenes. Involved in both constitutive and jasmonic acid-dependent induced defense. Confers some resistance to sclareol and B.cinerea. The chain is Pleiotropic drug resistance protein 1 (PDR1) from Nicotiana plumbaginifolia (Leadwort-leaved tobacco).